Here is a 306-residue protein sequence, read N- to C-terminus: Putative dihydroorotate dehydrogenase A (fumarate) (306 aa).

FMN contacts are provided by residues S24 and 48–49 (KS). Substrate is bound by residues K48, 72-76 (NAVGL), and N129. N129 serves as a coordination point for FMN. C132 (nucleophile) is an active-site residue. FMN contacts are provided by K167 and I192. 193–194 (NS) contributes to the substrate binding site. FMN is bound by residues G218 and 244-245 (GG).

Belongs to the dihydroorotate dehydrogenase family. Type 1 subfamily. In terms of assembly, homodimer. FMN serves as cofactor.

The protein resides in the cytoplasm. The enzyme catalyses (S)-dihydroorotate + fumarate = orotate + succinate. The protein operates within pyrimidine metabolism; UMP biosynthesis via de novo pathway. Its function is as follows. Catalyzes the conversion of dihydroorotate to orotate with fumarate as the electron acceptor. This chain is Putative dihydroorotate dehydrogenase A (fumarate) (pyrD), found in Aeropyrum pernix (strain ATCC 700893 / DSM 11879 / JCM 9820 / NBRC 100138 / K1).